The following is a 547-amino-acid chain: Glucose-6-phosphate isomerase (547 aa).

Glu351 functions as the Proton donor in the catalytic mechanism. Catalysis depends on residues His382 and Lys509.

It belongs to the GPI family.

It is found in the cytoplasm. It catalyses the reaction alpha-D-glucose 6-phosphate = beta-D-fructose 6-phosphate. It functions in the pathway carbohydrate biosynthesis; gluconeogenesis. It participates in carbohydrate degradation; glycolysis; D-glyceraldehyde 3-phosphate and glycerone phosphate from D-glucose: step 2/4. In terms of biological role, catalyzes the reversible isomerization of glucose-6-phosphate to fructose-6-phosphate. The polypeptide is Glucose-6-phosphate isomerase (Coxiella burnetii (strain CbuG_Q212) (Coxiella burnetii (strain Q212))).